Reading from the N-terminus, the 108-residue chain is Phosphoribosyl-ATP pyrophosphatase (108 aa).

A disordered region spans residues 88–108; the sequence is VENELDRREGRSGIEEKASRK. The segment covering 91-108 has biased composition (basic and acidic residues); it reads ELDRREGRSGIEEKASRK.

It belongs to the PRA-PH family.

It localises to the cytoplasm. It carries out the reaction 1-(5-phospho-beta-D-ribosyl)-ATP + H2O = 1-(5-phospho-beta-D-ribosyl)-5'-AMP + diphosphate + H(+). It functions in the pathway amino-acid biosynthesis; L-histidine biosynthesis; L-histidine from 5-phospho-alpha-D-ribose 1-diphosphate: step 2/9. In Paracoccus denitrificans (strain Pd 1222), this protein is Phosphoribosyl-ATP pyrophosphatase.